The primary structure comprises 413 residues: Multifunctional CCA protein (413 aa).

The ATP site is built by glycine 8 and arginine 11. 2 residues coordinate CTP: glycine 8 and arginine 11. Residues aspartate 21 and aspartate 23 each contribute to the Mg(2+) site. Arginine 91, arginine 143, and arginine 146 together coordinate ATP. CTP is bound by residues arginine 91, arginine 143, and arginine 146. Positions 232–333 constitute an HD domain; sequence TGVHVMMVID…VRLLERADAL (102 aa).

Belongs to the tRNA nucleotidyltransferase/poly(A) polymerase family. Bacterial CCA-adding enzyme type 1 subfamily. As to quaternary structure, monomer. Can also form homodimers and oligomers. The cofactor is Mg(2+). Ni(2+) serves as cofactor.

The catalysed reaction is a tRNA precursor + 2 CTP + ATP = a tRNA with a 3' CCA end + 3 diphosphate. It catalyses the reaction a tRNA with a 3' CCA end + 2 CTP + ATP = a tRNA with a 3' CCACCA end + 3 diphosphate. Catalyzes the addition and repair of the essential 3'-terminal CCA sequence in tRNAs without using a nucleic acid template. Adds these three nucleotides in the order of C, C, and A to the tRNA nucleotide-73, using CTP and ATP as substrates and producing inorganic pyrophosphate. tRNA 3'-terminal CCA addition is required both for tRNA processing and repair. Also involved in tRNA surveillance by mediating tandem CCA addition to generate a CCACCA at the 3' terminus of unstable tRNAs. While stable tRNAs receive only 3'-terminal CCA, unstable tRNAs are marked with CCACCA and rapidly degraded. The sequence is that of Multifunctional CCA protein from Burkholderia pseudomallei (strain 668).